The following is a 451-amino-acid chain: tRNA modification GTPase MnmE (451 aa).

(6S)-5-formyl-5,6,7,8-tetrahydrofolate is bound by residues R23, E80, and K119. Residues 215–372 (GIKVVLAGQP…LRAALLKTAG (158 aa)) form the TrmE-type G domain. N225 is a binding site for K(+). GTP contacts are provided by residues 225–230 (NVGKSS), 244–250 (TDIPGTT), and 269–272 (DTAG). S229 contributes to the Mg(2+) binding site. Residues T244, I246, and T249 each coordinate K(+). T250 is a Mg(2+) binding site. (6S)-5-formyl-5,6,7,8-tetrahydrofolate is bound at residue K451.

This sequence belongs to the TRAFAC class TrmE-Era-EngA-EngB-Septin-like GTPase superfamily. TrmE GTPase family. In terms of assembly, homodimer. Heterotetramer of two MnmE and two MnmG subunits. It depends on K(+) as a cofactor.

Its subcellular location is the cytoplasm. In terms of biological role, exhibits a very high intrinsic GTPase hydrolysis rate. Involved in the addition of a carboxymethylaminomethyl (cmnm) group at the wobble position (U34) of certain tRNAs, forming tRNA-cmnm(5)s(2)U34. This chain is tRNA modification GTPase MnmE, found in Nitrosomonas europaea (strain ATCC 19718 / CIP 103999 / KCTC 2705 / NBRC 14298).